Consider the following 362-residue polypeptide: Endopolygalacturonase II (362 aa).

Residues 1 to 20 form the signal peptide; that stretch reads MHSFASLLRYGLAAGATLAS. Residues 21–27 constitute a propeptide that is removed on maturation; the sequence is ASPIEAR. Cys-30 and Cys-45 are oxidised to a cystine. One copy of the PbH1 1 repeat lies at 156-186; that stretch reads SDDITLTDITINNADGDSLGGHNTDAFDVGN. Residue Asp-201 is the Proton donor of the active site. Cys-203 and Cys-219 form a disulfide bridge. PbH1 repeat units follow at residues 209–229, 238–259, 267–289, and 301–322; these read GENI…SIGS, VKNV…RIKT, VSEI…VIQQ, and TNGV…DSKA. The active site involves His-223. Asn-240 carries N-linked (GlcNAc...) asparagine glycosylation. Cystine bridges form between Cys-329–Cys-334 and Cys-353–Cys-362.

The protein belongs to the glycosyl hydrolase 28 family.

The protein resides in the secreted. It catalyses the reaction (1,4-alpha-D-galacturonosyl)n+m + H2O = (1,4-alpha-D-galacturonosyl)n + (1,4-alpha-D-galacturonosyl)m.. Involved in maceration and soft-rotting of plant tissue. Hydrolyzes the 1,4-alpha glycosidic bonds of de-esterified pectate in the smooth region of the plant cell wall. In Aspergillus awamori (Black koji mold), this protein is Endopolygalacturonase II (pgaII).